Reading from the N-terminus, the 711-residue chain is Polyribonucleotide nucleotidyltransferase (711 aa).

2 residues coordinate Mg(2+): aspartate 486 and aspartate 492. In terms of domain architecture, KH spans 553-612 (PRIHTIKINPDKIKDVIGKGGSVIRALTEETGTTIEIEDDGTVKIAATDGEKAKHAIRRI). Residues 622–690 (GRVYNGKVTR…RQGRIRLSIK (69 aa)) enclose the S1 motif domain. The segment at 690 to 711 (KEATEQSQPAAALEAPAAEQGE) is disordered. Over residues 698 to 711 (PAAALEAPAAEQGE) the composition is skewed to low complexity.

The protein belongs to the polyribonucleotide nucleotidyltransferase family. In terms of assembly, component of the RNA degradosome, which is a multiprotein complex involved in RNA processing and mRNA degradation. Requires Mg(2+) as cofactor.

It is found in the cytoplasm. It carries out the reaction RNA(n+1) + phosphate = RNA(n) + a ribonucleoside 5'-diphosphate. Involved in mRNA degradation. Catalyzes the phosphorolysis of single-stranded polyribonucleotides processively in the 3'- to 5'-direction. This is Polyribonucleotide nucleotidyltransferase from Escherichia coli O127:H6 (strain E2348/69 / EPEC).